The following is a 319-amino-acid chain: CBBY-like protein (319 aa).

The N-terminal 65 residues, 1-65 (MATVKISLSL…YRSSRSVGVT (65 aa)), are a transit peptide targeting the chloroplast. Asp82 (nucleophile) is an active-site residue. The Mg(2+) site is built by Asp82 and Asp84. Residue Asp82 coordinates substrate. The Proton donor role is filled by Asp84. Substrate contacts are provided by residues Glu91, 125–129 (GGKER), 158–161 (HKQK), and 198–204 (STSNEKA). Asp258 contacts Mg(2+).

Belongs to the HAD-like hydrolase superfamily. DOG/GPP family. Mg(2+) serves as cofactor.

The protein resides in the plastid. Its subcellular location is the chloroplast. It catalyses the reaction D-xylulose 1,5-bisphosphate + H2O = D-xylulose 5-phosphate + phosphate. In terms of biological role, highly selective xylulose-1,5-bisphosphate (XuBP) phosphatase. Also shows activity towards ribulose-1,5-bisphosphate (RuBP) and fructose-1,6-bisphosphate (FBP), but not towards fructose-6-phosphate (F6P) or ribulose-5-phosphate (Ru5P). Degrades xylulose-1,5-bisphosphate, a potent inhibitor of rubisco produced by the rubisco itself. This Arabidopsis thaliana (Mouse-ear cress) protein is CBBY-like protein.